Reading from the N-terminus, the 199-residue chain is Fe/S biogenesis protein NfuA (199 aa).

Positions 151 and 154 each coordinate [4Fe-4S] cluster.

It belongs to the NfuA family. In terms of assembly, homodimer. [4Fe-4S] cluster serves as cofactor.

Its function is as follows. Involved in iron-sulfur cluster biogenesis. Binds a 4Fe-4S cluster, can transfer this cluster to apoproteins, and thereby intervenes in the maturation of Fe/S proteins. Could also act as a scaffold/chaperone for damaged Fe/S proteins. This chain is Fe/S biogenesis protein NfuA, found in Xanthomonas euvesicatoria pv. vesicatoria (strain 85-10) (Xanthomonas campestris pv. vesicatoria).